A 150-amino-acid polypeptide reads, in one-letter code: FAD synthase (150 aa).

Residues 8–9 (AF), 13–16 (HPGH), Asp-95, and His-122 contribute to the ATP site.

Belongs to the archaeal FAD synthase family. As to quaternary structure, homodimer. A divalent metal cation serves as cofactor.

It catalyses the reaction FMN + ATP + H(+) = FAD + diphosphate. It participates in cofactor biosynthesis; FAD biosynthesis; FAD from FMN: step 1/1. In terms of biological role, catalyzes the transfer of the AMP portion of ATP to flavin mononucleotide (FMN) to produce flavin adenine dinucleotide (FAD) coenzyme. This chain is FAD synthase, found in Methanobrevibacter ruminantium (strain ATCC 35063 / DSM 1093 / JCM 13430 / OCM 146 / M1) (Methanobacterium ruminantium).